The following is a 121-amino-acid chain: Holo-[acyl-carrier-protein] synthase (121 aa).

2 residues coordinate Mg(2+): Asp-8 and Glu-58.

Belongs to the P-Pant transferase superfamily. AcpS family. Mg(2+) serves as cofactor.

The protein resides in the cytoplasm. The catalysed reaction is apo-[ACP] + CoA = holo-[ACP] + adenosine 3',5'-bisphosphate + H(+). Functionally, transfers the 4'-phosphopantetheine moiety from coenzyme A to a Ser of acyl-carrier-protein. This Bacillus pumilus (strain SAFR-032) protein is Holo-[acyl-carrier-protein] synthase.